The following is a 215-amino-acid chain: Adenylate kinase (215 aa).

10–15 (GAGKGT) contributes to the ATP binding site. The segment at 30-59 (STGDMFRAAIKEGTELGKQAKALMDQGKLV) is NMP. AMP contacts are provided by residues T31, R36, 57–59 (KLV), 85–88 (GFPR), and Q92. Positions 122 to 159 (GRRVHQPSGRTYHIIYNPPKVAGQDDITGEELITRADD) are LID. ATP contacts are provided by residues R123 and 132 to 133 (TY). Residues R156 and R167 each coordinate AMP. Residue K200 coordinates ATP.

The protein belongs to the adenylate kinase family. Monomer.

It is found in the cytoplasm. It catalyses the reaction AMP + ATP = 2 ADP. It functions in the pathway purine metabolism; AMP biosynthesis via salvage pathway; AMP from ADP: step 1/1. In terms of biological role, catalyzes the reversible transfer of the terminal phosphate group between ATP and AMP. Plays an important role in cellular energy homeostasis and in adenine nucleotide metabolism. The protein is Adenylate kinase of Haemophilus ducreyi (strain 35000HP / ATCC 700724).